The sequence spans 591 residues: L-fucose isomerase (591 aa).

Residues Glu337 and Asp361 each act as proton acceptor in the active site. Mn(2+) is bound by residues Glu337, Asp361, and His528.

The protein belongs to the L-fucose isomerase family. As to quaternary structure, homohexamer. Mn(2+) is required as a cofactor.

It is found in the cytoplasm. It carries out the reaction L-fucose = L-fuculose. It participates in carbohydrate degradation; L-fucose degradation; L-lactaldehyde and glycerone phosphate from L-fucose: step 1/3. Its function is as follows. Converts the aldose L-fucose into the corresponding ketose L-fuculose. This chain is L-fucose isomerase, found in Klebsiella pneumoniae (strain 342).